The following is a 597-amino-acid chain: Leishmanolysin (597 aa).

A signal peptide spans 1-39 (MSVDSSSTHRHRCVAARLVPLAAAGAAVTVAVGTAAAWA). A propeptide spans 40–99 (HAGAVQHRCIHDAMQARVRQSVAAQRMAPSAVSAVGLPHVTLDAGNTAAGADPSTGTANV) (activation peptide). Intrachain disulfides connect Cys124–Cys141 and Cys190–Cys229. A Zn(2+)-binding site is contributed by His263. Glu264 is an active-site residue. His267 contributes to the Zn(2+) binding site. An N-linked (GlcNAc...) asparagine glycan is attached at Asn299. 7 cysteine pairs are disulfide-bonded: Cys313–Cys383, Cys390–Cys452, Cys403–Cys422, Cys412–Cys486, Cys463–Cys507, Cys512–Cys562, and Cys532–Cys555. His332 provides a ligand contact to Zn(2+). Asn404 is a glycosylation site (N-linked (GlcNAc...) asparagine). Asn574 carries GPI-anchor amidated asparagine lipidation. Positions 575–597 (AAGRRGPRAATALVVAALLAVAL) are cleaved as a propeptide — removed in mature form.

It belongs to the peptidase M8 family. Zn(2+) is required as a cofactor.

The protein localises to the cell membrane. The enzyme catalyses Preference for hydrophobic residues at P1 and P1' and basic residues at P2' and P3'. A model nonapeptide is cleaved at -Ala-Tyr-|-Leu-Lys-Lys-.. Has an integral role during the infection of macrophages in the mammalian host. This is Leishmanolysin (gp63) from Leishmania amazonensis.